The chain runs to 359 residues: MLISQRPSLAEEAVAETRSRFVIEPLEPGFGYTLGNSLRRTLLSSIPGAAVTSLRIDGVLHEFTTIPGVKEDVTDVILNLKELVVSSEEDEPVTMYLRKQGPGEVTAADIVPPAGVTVHNPDLHIATLNGKGKLEIELVVERGRGYVPAVQNKQTGAEIGRIPVDSIYSPVLKVTYKVEATRVEQRTDFDKLILDVETKPSITPRDAVASAGRTLVELFGLARELNVDAEGIEIGPSPAEADTIAAYAMPIEDLDLTVRSYNCLKREGIHTVGELVSRSEADLLDIRNFGAKSIDEVKLKLVGLGLSLKDSPPGFDPSAAAAEYPSEGWASETETVGGLGRVEDNGYDDGQDYAETEQL.

Residues 1-226 (MLISQRPSLA…ELFGLARELN (226 aa)) form an alpha N-terminal domain (alpha-NTD) region. Residues 241–359 (ADTIAAYAMP…GQDYAETEQL (119 aa)) are alpha C-terminal domain (alpha-CTD). The tract at residues 315–359 (FDPSAAAAEYPSEGWASETETVGGLGRVEDNGYDDGQDYAETEQL) is disordered. The segment covering 345-359 (NGYDDGQDYAETEQL) has biased composition (acidic residues).

It belongs to the RNA polymerase alpha chain family. As to quaternary structure, homodimer. The RNAP catalytic core consists of 2 alpha, 1 beta, 1 beta' and 1 omega subunit. When a sigma factor is associated with the core the holoenzyme is formed, which can initiate transcription.

It catalyses the reaction RNA(n) + a ribonucleoside 5'-triphosphate = RNA(n+1) + diphosphate. In terms of biological role, DNA-dependent RNA polymerase catalyzes the transcription of DNA into RNA using the four ribonucleoside triphosphates as substrates. This Saccharopolyspora erythraea (strain ATCC 11635 / DSM 40517 / JCM 4748 / NBRC 13426 / NCIMB 8594 / NRRL 2338) protein is DNA-directed RNA polymerase subunit alpha.